Here is a 505-residue protein sequence, read N- to C-terminus: Flagellin (505 aa).

Belongs to the bacterial flagellin family.

Its subcellular location is the secreted. It is found in the bacterial flagellum. In terms of biological role, flagellin is the subunit protein which polymerizes to form the filaments of bacterial flagella. This Salmonella senftenberg protein is Flagellin (fliC).